The primary structure comprises 350 residues: D-alanine--D-alanine ligase (350 aa).

The region spanning 138 to 346 is the ATP-grasp domain; that stretch reads KSAFSSAGLS…LEQLVHKLIQ (209 aa). ATP is bound at residue 173-228; that stretch reads ERELNYPCFVKPANLGSSVGISKVRSRQELEAGLEQAAALDPRLVVEQGVNAREVE. The Mg(2+) site is built by aspartate 299, glutamate 313, and asparagine 315.

The protein belongs to the D-alanine--D-alanine ligase family. It depends on Mg(2+) as a cofactor. Mn(2+) is required as a cofactor.

The protein localises to the cytoplasm. It carries out the reaction 2 D-alanine + ATP = D-alanyl-D-alanine + ADP + phosphate + H(+). Its pathway is cell wall biogenesis; peptidoglycan biosynthesis. Cell wall formation. In Synechococcus sp. (strain CC9605), this protein is D-alanine--D-alanine ligase.